We begin with the raw amino-acid sequence, 82 residues long: EMBRYO SURROUNDING FACTOR 1-like protein 10 (82 aa).

The N-terminal stretch at 1–22 is a signal peptide; the sequence is MSSLYFAILCLFMIFLVPLHEF. Disulfide bonds link Cys39–Cys55, Cys44–Cys74, Cys53–Cys70, and Cys56–Cys63.

Belongs to the MEG family. As to expression, expressed in stems, leaves and flowers.

The polypeptide is EMBRYO SURROUNDING FACTOR 1-like protein 10 (ESFL10) (Arabidopsis thaliana (Mouse-ear cress)).